Reading from the N-terminus, the 182-residue chain is ATP synthase subunit b, chloroplastic (182 aa).

Residues 29 to 47 (IINLALLIVLVINVAKDVL) form a helical membrane-spanning segment.

This sequence belongs to the ATPase B chain family. As to quaternary structure, F-type ATPases have 2 components, F(1) - the catalytic core - and F(0) - the membrane proton channel. F(1) has five subunits: alpha(3), beta(3), gamma(1), delta(1), epsilon(1). F(0) has four main subunits: a(1), b(1), b'(1) and c(10-14). The alpha and beta chains form an alternating ring which encloses part of the gamma chain. F(1) is attached to F(0) by a central stalk formed by the gamma and epsilon chains, while a peripheral stalk is formed by the delta, b and b' chains.

It localises to the plastid. Its subcellular location is the chloroplast thylakoid membrane. Functionally, f(1)F(0) ATP synthase produces ATP from ADP in the presence of a proton or sodium gradient. F-type ATPases consist of two structural domains, F(1) containing the extramembraneous catalytic core and F(0) containing the membrane proton channel, linked together by a central stalk and a peripheral stalk. During catalysis, ATP synthesis in the catalytic domain of F(1) is coupled via a rotary mechanism of the central stalk subunits to proton translocation. Component of the F(0) channel, it forms part of the peripheral stalk, linking F(1) to F(0). This is ATP synthase subunit b, chloroplastic from Heterosigma akashiwo (strain NIES-293 / 8280G21-1).